Consider the following 689-residue polypeptide: Elongation factor G (689 aa).

The region spanning 9–283 (AKFRNIGIMA…AIVEFMPSPL (275 aa)) is the tr-type G domain. Residues 18–25 (AHIDAGKT), 82–86 (DTPGH), and 136–139 (NKMD) contribute to the GTP site.

This sequence belongs to the TRAFAC class translation factor GTPase superfamily. Classic translation factor GTPase family. EF-G/EF-2 subfamily.

It localises to the cytoplasm. In terms of biological role, catalyzes the GTP-dependent ribosomal translocation step during translation elongation. During this step, the ribosome changes from the pre-translocational (PRE) to the post-translocational (POST) state as the newly formed A-site-bound peptidyl-tRNA and P-site-bound deacylated tRNA move to the P and E sites, respectively. Catalyzes the coordinated movement of the two tRNA molecules, the mRNA and conformational changes in the ribosome. In Clostridium botulinum (strain Kyoto / Type A2), this protein is Elongation factor G.